The sequence spans 128 residues: Large ribosomal subunit protein eL22 (128 aa).

Belongs to the eukaryotic ribosomal protein eL22 family. As to quaternary structure, component of the large ribosomal subunit.

The protein resides in the cytoplasm. Its function is as follows. Component of the large ribosomal subunit. The ribosome is a large ribonucleoprotein complex responsible for the synthesis of proteins in the cell. This Ictalurus punctatus (Channel catfish) protein is Large ribosomal subunit protein eL22 (rpl22).